We begin with the raw amino-acid sequence, 181 residues long: Mating-type M-specific polypeptide Mc (181 aa).

A DNA-binding region (HMG box) is located at residues 103-171; the sequence is TPRPPNAFIL…QHQKMYPGYK (69 aa).

Its subcellular location is the nucleus. It localises to the cytoplasm. The protein resides in the cytoskeleton. It is found in the microtubule organizing center. The protein localises to the spindle pole body. Its function is as follows. Mating type proteins are sequence specific DNA-binding proteins that act as master switches in yeast differentiation by controlling gene expression in a cell type-specific fashion. Positive regulator of MFM genes. The HMG box recognizes the DNA sequence 5'-AACAAAG-3'. Required for conjugation and efficient meiosis. The sequence is that of Mating-type M-specific polypeptide Mc (mat3-Mc) from Schizosaccharomyces pombe (Fission yeast).